A 1030-amino-acid polypeptide reads, in one-letter code: Isoleucine--tRNA ligase 2 (1030 aa).

The short motif at 48-58 (PFATGLPHYGH) is the 'HIGH' region element. Positions 589 to 593 (KMSKR) match the 'KMSKS' region motif. Lys-592 is a binding site for ATP.

The protein belongs to the class-I aminoacyl-tRNA synthetase family. IleS type 2 subfamily. Monomer. Zn(2+) serves as cofactor.

Its subcellular location is the cytoplasm. The catalysed reaction is tRNA(Ile) + L-isoleucine + ATP = L-isoleucyl-tRNA(Ile) + AMP + diphosphate. In terms of biological role, catalyzes the attachment of isoleucine to tRNA(Ile). As IleRS can inadvertently accommodate and process structurally similar amino acids such as valine, to avoid such errors it has two additional distinct tRNA(Ile)-dependent editing activities. One activity is designated as 'pretransfer' editing and involves the hydrolysis of activated Val-AMP. The other activity is designated 'posttransfer' editing and involves deacylation of mischarged Val-tRNA(Ile). Its function is as follows. Confers high-level resistance to the antibiotic mupirocin (pseudomonic acid A), an Ile-analog produced by P.fluorescens NCIMB 10586 itself that competitively inhibits activation by Ile-tRNA synthetase, thus inhibiting protein biosynthesis. The sequence is that of Isoleucine--tRNA ligase 2 (ileS2) from Pseudomonas fluorescens.